The chain runs to 480 residues: Salicylate hydroxylase asL1 (480 aa).

The chain crosses the membrane as a helical span at residues 17 to 37 (PMEIAIVGGGIVGVILAIGLT). Positions 47 and 60 each coordinate FAD. A glycan (N-linked (GlcNAc...) asparagine) is linked at Asn87. FAD is bound at residue Arg131. A glycan (N-linked (GlcNAc...) asparagine) is linked at Asn168. Residues Arg213 and Tyr246 contribute to the active site. Asn250 carries an N-linked (GlcNAc...) asparagine glycan. Asp329 and Ala342 together coordinate FAD. N-linked (GlcNAc...) asparagine glycans are attached at residues Asn400 and Asn464.

It belongs to the paxM FAD-dependent monooxygenase family. Requires FAD as cofactor.

It is found in the membrane. It participates in secondary metabolite biosynthesis; terpenoid biosynthesis. Functionally, salicylate hydroxylase; part of the gene cluster that mediates the biosynthesis of xenovulene A, an unusual meroterpenoid that has potent inhibitory effects on the human gamma-aminobutyrate A (GABAA) benzodiazepine receptor. The first step of xenovulene A biosynthesis is the biosynthesis of 3-methylorcinaldehyde performed by the non-reducing polyketide synthase aspks1. The salicylate hydroxylase asL1 then catalyzes the oxidative dearomatization of 3-methylorcinaldehyde to yield a dearomatized hydroxycyclohexadione. The 2-oxoglutarate-dependent dioxygenase asL3 further catalyzes the oxidative ring expansion to provide the first tropolone metabolite. The cytochrome P450 monooxygenase asR2 allows the synthesis of tropolone hemiacetal. In parallel, a previously unrecognised class of terpene cyclase, asR6, produces alpha-humulene from farnesylpyrophosphate (FPP). The putative Diels-Alderase asR5 probably catalyzes the formation of the tropolone-humulene skeleton by linking humulene and the polyketide moiety. Oxidative-ring contractions catalyzed by asL4 and asL6 then processively remove carbon atoms from the polyketide to yield xenovulene A. The polypeptide is Salicylate hydroxylase asL1 (Sarocladium schorii (Acremonium strictum (strain IMI 501407))).